The primary structure comprises 157 residues: Small ribosomal subunit protein uS7 (157 aa).

It belongs to the universal ribosomal protein uS7 family. As to quaternary structure, part of the 30S ribosomal subunit. Contacts proteins S9 and S11.

In terms of biological role, one of the primary rRNA binding proteins, it binds directly to 16S rRNA where it nucleates assembly of the head domain of the 30S subunit. Is located at the subunit interface close to the decoding center, probably blocks exit of the E-site tRNA. This chain is Small ribosomal subunit protein uS7, found in Borrelia turicatae (strain 91E135).